A 92-amino-acid chain; its full sequence is Small ribosomal subunit protein uS19c (92 aa).

It belongs to the universal ribosomal protein uS19 family.

The protein resides in the plastid. It is found in the chloroplast. Functionally, protein S19 forms a complex with S13 that binds strongly to the 16S ribosomal RNA. The sequence is that of Small ribosomal subunit protein uS19c from Huperzia lucidula (Shining clubmoss).